The chain runs to 46 residues: AVPAGTLSPLQMESLREVCEVNVACDEMADTAGIVAAYTXFYGPVP.

The Gla domain maps to 1–43; the sequence is AVPAGTLSPLQMESLREVCEVNVACDEMADTAGIVAAYTXFYG. Residue Thr6 is modified to Phosphothreonine. Ca(2+) contacts are provided by Glu13, Glu17, Glu20, and Asp26. Residues Glu13, Glu17, and Glu20 each carry the 4-carboxyglutamate modification. An intrachain disulfide couples Cys19 to Cys25. A 4-carboxyglutamate modification is found at Glu27.

It belongs to the osteocalcin/matrix Gla protein family. Post-translationally, gamma-carboxyglutamate residues are formed by vitamin K dependent carboxylation by GGCX. These residues are essential for the binding of calcium.

The protein resides in the secreted. In terms of biological role, the carboxylated form is one of the main organic components of the bone matrix, which constitutes 1-2% of the total bone protein. The carboxylated form binds strongly to apatite and calcium. This is Osteocalcin 2 from Solea senegalensis (Senegalese sole).